Consider the following 141-residue polypeptide: MAIERTLSIIKPDAVAKNVIGQIYARFEAAGLKIVAAKMVHLSRGEAEQFYAVHKERPFFKDLVDFMVSGPVMIQALEGEGAIAKNRDLMGATDPKKADKGTIRADFADSIDANAVHGSDAAETAAVEIAFFFPGMNVYTR.

Residues Lys-11, Phe-59, Arg-87, Thr-93, Arg-104, and Asn-114 each contribute to the ATP site. The active-site Pros-phosphohistidine intermediate is His-117.

This sequence belongs to the NDK family. As to quaternary structure, homotetramer. Mg(2+) serves as cofactor.

Its subcellular location is the cytoplasm. The enzyme catalyses a 2'-deoxyribonucleoside 5'-diphosphate + ATP = a 2'-deoxyribonucleoside 5'-triphosphate + ADP. The catalysed reaction is a ribonucleoside 5'-diphosphate + ATP = a ribonucleoside 5'-triphosphate + ADP. Major role in the synthesis of nucleoside triphosphates other than ATP. The ATP gamma phosphate is transferred to the NDP beta phosphate via a ping-pong mechanism, using a phosphorylated active-site intermediate. The protein is Nucleoside diphosphate kinase of Cupriavidus pinatubonensis (strain JMP 134 / LMG 1197) (Cupriavidus necator (strain JMP 134)).